The following is a 243-amino-acid chain: Probable phosphatase CLI_3563 (243 aa).

Residues histidine 8, histidine 10, histidine 16, histidine 41, glutamate 74, histidine 102, histidine 132, aspartate 192, and histidine 194 each coordinate Zn(2+).

This sequence belongs to the PHP family. It depends on Zn(2+) as a cofactor.

This is Probable phosphatase CLI_3563 from Clostridium botulinum (strain Langeland / NCTC 10281 / Type F).